The sequence spans 239 residues: Protein GrpE (239 aa).

2 disordered regions span residues Met-1–Lys-53 and Gly-210–Asn-239. 2 stretches are compositionally biased toward basic and acidic residues: residues Asn-34 to Lys-53 and Ser-219 to Asp-230.

The protein belongs to the GrpE family. As to quaternary structure, homodimer.

Its subcellular location is the cytoplasm. Participates actively in the response to hyperosmotic and heat shock by preventing the aggregation of stress-denatured proteins, in association with DnaK and GrpE. It is the nucleotide exchange factor for DnaK and may function as a thermosensor. Unfolded proteins bind initially to DnaJ; upon interaction with the DnaJ-bound protein, DnaK hydrolyzes its bound ATP, resulting in the formation of a stable complex. GrpE releases ADP from DnaK; ATP binding to DnaK triggers the release of the substrate protein, thus completing the reaction cycle. Several rounds of ATP-dependent interactions between DnaJ, DnaK and GrpE are required for fully efficient folding. The polypeptide is Protein GrpE (Prochlorococcus marinus (strain MIT 9515)).